The following is a 24-amino-acid chain: Brevinin-1BYc (24 aa).

Cys-18 and Cys-24 are disulfide-bonded.

Expressed by the skin glands.

The protein localises to the secreted. Antibacterial activity against Gram-positive bacterium S.aureus. Weak antifungal activity against C.albicans. The protein is Brevinin-1BYc of Rana boylii (Foothill yellow-legged frog).